A 104-amino-acid chain; its full sequence is Large ribosomal subunit protein uL24 (104 aa).

This sequence belongs to the universal ribosomal protein uL24 family. As to quaternary structure, part of the 50S ribosomal subunit.

Functionally, one of two assembly initiator proteins, it binds directly to the 5'-end of the 23S rRNA, where it nucleates assembly of the 50S subunit. Its function is as follows. One of the proteins that surrounds the polypeptide exit tunnel on the outside of the subunit. This Treponema denticola (strain ATCC 35405 / DSM 14222 / CIP 103919 / JCM 8153 / KCTC 15104) protein is Large ribosomal subunit protein uL24.